We begin with the raw amino-acid sequence, 94 residues long: Large ribosomal subunit protein bL25 (94 aa).

The protein belongs to the bacterial ribosomal protein bL25 family. In terms of assembly, part of the 50S ribosomal subunit; part of the 5S rRNA/L5/L18/L25 subcomplex. Contacts the 5S rRNA. Binds to the 5S rRNA independently of L5 and L18.

In terms of biological role, this is one of the proteins that binds to the 5S RNA in the ribosome where it forms part of the central protuberance. In Salmonella gallinarum (strain 287/91 / NCTC 13346), this protein is Large ribosomal subunit protein bL25.